The following is a 219-amino-acid chain: Small ribosomal subunit protein uS3 (219 aa).

The KH type-2 domain occupies 38–106 (IREYIENRLK…RVHINIFEVK (69 aa)).

It belongs to the universal ribosomal protein uS3 family. Part of the 30S ribosomal subunit. Forms a tight complex with proteins S10 and S14.

Functionally, binds the lower part of the 30S subunit head. Binds mRNA in the 70S ribosome, positioning it for translation. This is Small ribosomal subunit protein uS3 from Halalkalibacterium halodurans (strain ATCC BAA-125 / DSM 18197 / FERM 7344 / JCM 9153 / C-125) (Bacillus halodurans).